The primary structure comprises 600 residues: Elongation factor 4 (600 aa).

Residues 4-187 form the tr-type G domain; it reads KYIRNFSIVA…AIIEQIPPPL (184 aa). GTP contacts are provided by residues 16-21 and 134-137; these read DHGKST and NKID.

It belongs to the TRAFAC class translation factor GTPase superfamily. Classic translation factor GTPase family. LepA subfamily.

It localises to the cell membrane. It catalyses the reaction GTP + H2O = GDP + phosphate + H(+). Its function is as follows. Required for accurate and efficient protein synthesis under certain stress conditions. May act as a fidelity factor of the translation reaction, by catalyzing a one-codon backward translocation of tRNAs on improperly translocated ribosomes. Back-translocation proceeds from a post-translocation (POST) complex to a pre-translocation (PRE) complex, thus giving elongation factor G a second chance to translocate the tRNAs correctly. Binds to ribosomes in a GTP-dependent manner. This is Elongation factor 4 from Malacoplasma penetrans (strain HF-2) (Mycoplasma penetrans).